We begin with the raw amino-acid sequence, 351 residues long: Histidine protein kinase SaeS (351 aa).

The next 2 membrane-spanning stretches (helical) occupy residues isoleucine 9 to isoleucine 29 and threonine 40 to isoleucine 60. The HAMP domain occupies asparagine 61–asparagine 114. Positions asparagine 129 to aspartate 348 constitute a Histidine kinase domain. Histidine 132 is modified (phosphohistidine; by autocatalysis).

Autophosphorylated.

It is found in the cell membrane. It catalyses the reaction ATP + protein L-histidine = ADP + protein N-phospho-L-histidine.. Its function is as follows. Member of the two-component regulatory system SaeR/SaeS involved in the regulation of staphylococcal virulence factors in a strain-dependent fashion. Probably functions as a membrane-associated protein kinase that upon sensing the appropriate signal, autophosphorylates and in turn activates the cytosolic response regulator SaeR. The polypeptide is Histidine protein kinase SaeS (saeS) (Staphylococcus aureus (strain USA300)).